A 516-amino-acid chain; its full sequence is Protein psiC (516 aa).

Positions 1 to 19 are cleaved as a signal peptide; that stretch reads MKILILSFFLILGINLVFC. The region spanning 109 to 249 is the PA14 domain; that stretch reads ESKDEPGIYV…YDACGVCLGK (141 aa). Residues N134, N234, N250, N284, N333, N357, and N367 are each glycosylated (N-linked (GlcNAc...) asparagine). The span at 418–427 shows a compositional bias: low complexity; it reads DIIIDSSSDI. Positions 418-465 are disordered; the sequence is DIIIDSSSDIPIPTLSPSPQPSRFPTDTPTNTPMPPTRPPTPTEDPKI. The span at 449–460 shows a compositional bias: pro residues; it reads TPMPPTRPPTPT.

The protein belongs to the prespore-cell-inducing factor family.

Its subcellular location is the secreted. This Dictyostelium discoideum (Social amoeba) protein is Protein psiC (psiC).